The following is a 136-amino-acid chain: uncharacterized protein (136 aa).

The next 4 membrane-spanning stretches (helical) occupy residues 10–32 (SAGIAFFVFIISAIILPGFFIWI), 44–66 (LRCGMANFAAVVITAVVAFILHF), 70–89 (VLLLPLLAFLIYLYVLKTLL), and 102–124 (IAGVVIFLLAVILLLIFGVWLLF).

It localises to the cell membrane. This is an uncharacterized protein from Archaeoglobus fulgidus (strain ATCC 49558 / DSM 4304 / JCM 9628 / NBRC 100126 / VC-16).